A 359-amino-acid polypeptide reads, in one-letter code: AA9 family lytic polysaccharide monooxygenase B (359 aa).

Residues methionine 1–alanine 18 form the signal peptide. Cu(2+)-binding residues include histidine 19 and histidine 102. 2 cysteine pairs are disulfide-bonded: cysteine 72–cysteine 190 and cysteine 113–cysteine 117. Asparagine 150 carries N-linked (GlcNAc...) asparagine glycosylation. Residues histidine 176 and glutamine 185 each contribute to the O2 site. Tyrosine 187 lines the Cu(2+) pocket. Residues glycine 241–lysine 310 form a disordered region. A compositionally biased stretch (polar residues) spans glycine 245–histidine 254. The segment covering threonine 255 to isoleucine 304 has biased composition (low complexity). Asparagine 345 carries N-linked (GlcNAc...) asparagine glycosylation.

The protein belongs to the polysaccharide monooxygenase AA9 family. Cu(2+) serves as cofactor.

It is found in the secreted. The catalysed reaction is [(1-&gt;4)-beta-D-glucosyl]n+m + reduced acceptor + O2 = 4-dehydro-beta-D-glucosyl-[(1-&gt;4)-beta-D-glucosyl]n-1 + [(1-&gt;4)-beta-D-glucosyl]m + acceptor + H2O.. Functionally, lytic polysaccharide monooxygenase (LPMO) that depolymerizes crystalline and amorphous polysaccharides via the oxidation of scissile alpha- or beta-(1-4)-glycosidic bonds, yielding C1 and C4 oxidation products. Catalysis by LPMOs requires the reduction of the active-site copper from Cu(II) to Cu(I) by a reducing agent and H(2)O(2) or O(2) as a cosubstrate. Active on cellulose and on xyloglucan for deconstruction of plant biomass. The chain is AA9 family lytic polysaccharide monooxygenase B from Geotrichum candidum (Oospora lactis).